A 298-amino-acid chain; its full sequence is Bifunctional protein FolD (298 aa).

NADP(+) contacts are provided by residues 166–168, serine 191, and isoleucine 232; that span reads GRS.

This sequence belongs to the tetrahydrofolate dehydrogenase/cyclohydrolase family. In terms of assembly, homodimer.

The enzyme catalyses (6R)-5,10-methylene-5,6,7,8-tetrahydrofolate + NADP(+) = (6R)-5,10-methenyltetrahydrofolate + NADPH. It carries out the reaction (6R)-5,10-methenyltetrahydrofolate + H2O = (6R)-10-formyltetrahydrofolate + H(+). It participates in one-carbon metabolism; tetrahydrofolate interconversion. Its function is as follows. Catalyzes the oxidation of 5,10-methylenetetrahydrofolate to 5,10-methenyltetrahydrofolate and then the hydrolysis of 5,10-methenyltetrahydrofolate to 10-formyltetrahydrofolate. The polypeptide is Bifunctional protein FolD (Erythrobacter litoralis (strain HTCC2594)).